We begin with the raw amino-acid sequence, 399 residues long: Chaperone protein DnaJ 1 (399 aa).

The region spanning 10–75 (DYYKVLGVPK…KKRKEYDEAR (66 aa)) is the J domain. The CR-type zinc-finger motif lies at 166–244 (GATVPLRMSS…CKGSGRAKSS (79 aa)). Zn(2+)-binding residues include Cys179, Cys182, Cys195, Cys198, Cys218, Cys221, Cys232, and Cys235. CXXCXGXG motif repeat units follow at residues 179–186 (CKACSGTG), 195–202 (CPTCVGTG), 218–225 (CPDCKGRG), and 232–239 (CEVCKGSG).

Belongs to the DnaJ family. In terms of assembly, homodimer. Requires Zn(2+) as cofactor.

The protein resides in the cytoplasm. Its function is as follows. Participates actively in the response to hyperosmotic and heat shock by preventing the aggregation of stress-denatured proteins and by disaggregating proteins, also in an autonomous, DnaK-independent fashion. Unfolded proteins bind initially to DnaJ; upon interaction with the DnaJ-bound protein, DnaK hydrolyzes its bound ATP, resulting in the formation of a stable complex. GrpE releases ADP from DnaK; ATP binding to DnaK triggers the release of the substrate protein, thus completing the reaction cycle. Several rounds of ATP-dependent interactions between DnaJ, DnaK and GrpE are required for fully efficient folding. Also involved, together with DnaK and GrpE, in the DNA replication of plasmids through activation of initiation proteins. This is Chaperone protein DnaJ 1 from Streptomyces coelicolor (strain ATCC BAA-471 / A3(2) / M145).